Reading from the N-terminus, the 2146-residue chain is YLP motif-containing protein 1 (2146 aa).

2 disordered regions span residues 1–381 (MYPN…ARLK) and 562–880 (PPVM…FKMQ). The span at 14–26 (YPPPPVPPPPPVA) shows a compositional bias: pro residues. Composition is skewed to low complexity over residues 27–48 (LPEA…PSSS) and 58–79 (LAQL…LQPH). Pro residues-rich tracts occupy residues 80-92 (HLPP…PPVM), 101-113 (QPPP…PPGP), 147-157 (PESPPVPPGSY), 165-175 (MPPPQPPPSYY), and 183-194 (YLPPAQPSPSQS). The span at 195-237 (PPSQSYLAPTPSYSSSSSSSQSYLSHSQSYLPSSQASPSRPSQ) shows a compositional bias: low complexity. 2 stretches are compositionally biased toward polar residues: residues 256-279 (NKTT…QQQA) and 286-308 (STMT…LQQR). A compositionally biased stretch (basic residues) spans 309 to 319 (TKVHLPGHKKG). Basic and acidic residues predominate over residues 325–334 (DTPEPVKEEV). Pro residues-rich tracts occupy residues 349–368 (EEPP…PPEE), 562–579 (PPVM…PGMP), and 586–642 (GPPP…PQGI). Over residues 643 to 663 (PPQLTAAPVPPASSSQSSQVP) the composition is skewed to low complexity. The segment covering 692–702 (AGPSEQVNSKA) has biased composition (polar residues). Lys-735 bears the N6-methyllysine mark. Ser-756 is subject to Phosphoserine. A compositionally biased stretch (basic and acidic residues) spans 758-806 (RGPRFDGPRRFEDLGSRCEGPRPKGPRFEGNRPDGPRPRYEGHPAEGTK). Position 814 is an omega-N-methylarginine (Arg-814). Composition is skewed to polar residues over residues 820–835 (FYIT…QSGP) and 868–880 (DTSS…FKMQ). Phosphoserine is present on Ser-829. Omega-N-methylarginine is present on Arg-831. Lys-891 participates in a covalent cross-link: Glycyl lysine isopeptide (Lys-Gly) (interchain with G-Cter in SUMO2). 2 disordered regions span residues 895-1211 (AAQS…GRNA) and 1243-1351 (NRED…DDRW). Composition is skewed to polar residues over residues 896-909 (AQSN…QQEP) and 923-933 (NWDQNVQSMET). Lys-983 participates in a covalent cross-link: Glycyl lysine isopeptide (Lys-Gly) (interchain with G-Cter in SUMO1); alternate. A Glycyl lysine isopeptide (Lys-Gly) (interchain with G-Cter in SUMO2); alternate cross-link involves residue Lys-983. 3 stretches are compositionally biased toward basic and acidic residues: residues 994–1012 (NNQD…RLEG), 1027–1036 (RMEDTRDKGL), and 1053–1093 (KQED…REKV). Lys-1053 is covalently cross-linked (Glycyl lysine isopeptide (Lys-Gly) (interchain with G-Cter in SUMO1); alternate). A Glycyl lysine isopeptide (Lys-Gly) (interchain with G-Cter in SUMO2); alternate cross-link involves residue Lys-1053. Ser-1100 and Ser-1119 each carry phosphoserine. 2 stretches are compositionally biased toward basic and acidic residues: residues 1129–1211 (GSRE…GRNA) and 1243–1264 (NRED…RGPW). Acidic residues predominate over residues 1266-1276 (DDWERDQDMDE). Residues 1277-1328 (DYNREMERDMDRDVDRISRPMDMYDRSLDNEWDRDYGRPLDEQESQFRERDI) are compositionally biased toward basic and acidic residues. Pro residues predominate over residues 1330–1342 (SLPPLPPLPPLPP). Ser-1402 bears the Phosphoserine mark. Disordered stretches follow at residues 1407-1438 (PSDV…SLDS), 1469-1573 (QKEQ…EQER), and 1602-1828 (IPSA…PPGR). Positions 1417–1430 (AEHMPSSHHSSEMM) are enriched in low complexity. Over residues 1469–1480 (QKEQLQKMKDFG) the composition is skewed to basic and acidic residues. Positions 1505 to 1520 (MYPPPGSYRPPPPMGK) are enriched in pro residues. Residues 1521–1539 (PPGSIVRPSAPPARSSVPV) show a composition bias toward low complexity. Pro residues-rich tracts occupy residues 1540-1562 (TRPP…PPVI) and 1606-1636 (PVLP…PPPV). Residue Lys-1652 forms a Glycyl lysine isopeptide (Lys-Gly) (interchain with G-Cter in SUMO2) linkage. Basic and acidic residues-rich tracts occupy residues 1662 to 1696 (ITLR…EPYF), 1704 to 1774 (ADHR…DRPV), 1783 to 1793 (GERRTYPEERM), and 1809 to 1828 (RVEK…PPGR). Residue Lys-1710 forms a Glycyl lysine isopeptide (Lys-Gly) (interchain with G-Cter in SUMO2) linkage. Residues 2096–2103 (KKRVRWAD) are involved in interaction with PPP1CA.

Interacts with PPP1CA and NCOA5. Forms a complex with ILF2, ILF3, KHDRBS1, RBMX, NCOA5 and PPP1CA. As to expression, expressed in neuronal, neuroblastoma and embryonic kidney cell lines (at protein level).

It is found in the nucleus. The protein localises to the nucleus speckle. Plays a role in the reduction of telomerase activity during differentiation of embryonic stem cells by binding to the core promoter of TERT and controlling its down-regulation. The chain is YLP motif-containing protein 1 (YLPM1) from Homo sapiens (Human).